We begin with the raw amino-acid sequence, 891 residues long: Dynein axonemal intermediate chain 3 (891 aa).

The span at 1–17 (MAPKQKKKTSRGKKRLK) shows a compositional bias: basic residues. A disordered region spans residues 1–22 (MAPKQKKKTSRGKKRLKPVLAA). 4 WD repeats span residues 395-435 (ESPD…DRIE), 477-533 (GHKK…PLTP), 670-709 (IHDG…GPLL), and 713-753 (CAPK…HEPA). Positions 818–861 (LEYVEQRKKIREQEKKEMELEMAKKKVKTYQKSKEQMQAELKMD) form a coiled coil.

Interacts with ACTR2; this interaction reduces binding of the Arp2/3 complex to the VCA domain of nucleation promoting factors. Part of the multisubunit axonemal dynein complex formed at least of two heavy chains and a number of intermediate and light chains. Found in a associated with the catalytic heavy chain DNAH2, the intermediate chain DNAI4, and the light chain DYNLT1.

The protein resides in the cytoplasm. Its function is as follows. Acts as a negative regulator of cell migration, invasion, and metastasis downstream of p53/TP53, through inhibition of Arp2/3 complex-mediated actin polymerization. Via its association with the multisubunit axonemal dynein complex, is potentially involved in the regulation of cilia function. May play a role in osteogenesis of dental tissue-derived mesenchymal stem cells. In Homo sapiens (Human), this protein is Dynein axonemal intermediate chain 3.